The sequence spans 156 residues: ATP synthase subunit b (156 aa).

Residues 11 to 31 traverse the membrane as a helical segment; sequence LIAFALFVWFCMKFVWPPIIN.

The protein belongs to the ATPase B chain family. In terms of assembly, F-type ATPases have 2 components, F(1) - the catalytic core - and F(0) - the membrane proton channel. F(1) has five subunits: alpha(3), beta(3), gamma(1), delta(1), epsilon(1). F(0) has three main subunits: a(1), b(2) and c(10-14). The alpha and beta chains form an alternating ring which encloses part of the gamma chain. F(1) is attached to F(0) by a central stalk formed by the gamma and epsilon chains, while a peripheral stalk is formed by the delta and b chains.

It is found in the cell inner membrane. F(1)F(0) ATP synthase produces ATP from ADP in the presence of a proton or sodium gradient. F-type ATPases consist of two structural domains, F(1) containing the extramembraneous catalytic core and F(0) containing the membrane proton channel, linked together by a central stalk and a peripheral stalk. During catalysis, ATP synthesis in the catalytic domain of F(1) is coupled via a rotary mechanism of the central stalk subunits to proton translocation. Functionally, component of the F(0) channel, it forms part of the peripheral stalk, linking F(1) to F(0). This chain is ATP synthase subunit b, found in Haemophilus influenzae (strain PittEE).